A 157-amino-acid chain; its full sequence is Protein FAM219A (157 aa).

Methionine 1 is modified (N-acetylmethionine). The disordered stretch occupies residues 1-103; it reads MMEEIDRFQD…SRYSSSGYSS (103 aa). A compositionally biased stretch (basic and acidic residues) spans 17–33; that stretch reads SDRDCDAREEKQRELAR. The segment covering 38-52 has biased composition (polar residues); sequence KNGSMGSPVNQQPKK. Phosphoserine occurs at positions 44 and 74. Threonine 85 carries the post-translational modification Phosphothreonine. Serine 87 and serine 94 each carry phosphoserine. The segment covering 94 to 103 has biased composition (low complexity); that stretch reads SRYSSSGYSS.

It belongs to the FAM219 family.

The sequence is that of Protein FAM219A (Fam219a) from Mus musculus (Mouse).